Consider the following 349-residue polypeptide: tRNA N6-adenosine threonylcarbamoyltransferase (349 aa).

Fe cation-binding residues include histidine 118 and histidine 122. Substrate-binding positions include leucine 141 to glycine 145, aspartate 174, glycine 187, and asparagine 280. Aspartate 308 is a Fe cation binding site.

Belongs to the KAE1 / TsaD family. Fe(2+) is required as a cofactor.

The protein localises to the cytoplasm. It carries out the reaction L-threonylcarbamoyladenylate + adenosine(37) in tRNA = N(6)-L-threonylcarbamoyladenosine(37) in tRNA + AMP + H(+). Its function is as follows. Required for the formation of a threonylcarbamoyl group on adenosine at position 37 (t(6)A37) in tRNAs that read codons beginning with adenine. Is involved in the transfer of the threonylcarbamoyl moiety of threonylcarbamoyl-AMP (TC-AMP) to the N6 group of A37, together with TsaE and TsaB. TsaD likely plays a direct catalytic role in this reaction. The chain is tRNA N6-adenosine threonylcarbamoyltransferase from Acidovorax sp. (strain JS42).